Reading from the N-terminus, the 372-residue chain is Glutamate 5-kinase (372 aa).

Residue Lys-14 participates in ATP binding. Substrate-binding residues include Ser-54, Asp-141, and Asn-153. An ATP-binding site is contributed by 173–174 (TD). Residues 280-358 (RGTLTLDEGA…DEIEKLLGYV (79 aa)) enclose the PUA domain.

This sequence belongs to the glutamate 5-kinase family.

The protein localises to the cytoplasm. The enzyme catalyses L-glutamate + ATP = L-glutamyl 5-phosphate + ADP. The protein operates within amino-acid biosynthesis; L-proline biosynthesis; L-glutamate 5-semialdehyde from L-glutamate: step 1/2. Functionally, catalyzes the transfer of a phosphate group to glutamate to form L-glutamate 5-phosphate. This Stutzerimonas stutzeri (strain A1501) (Pseudomonas stutzeri) protein is Glutamate 5-kinase.